We begin with the raw amino-acid sequence, 677 residues long: DNA-directed RNA polymerase subunit beta' (677 aa).

Zn(2+) is bound by residues Cys-69, Cys-71, Cys-87, and Cys-90. Asp-489, Asp-491, and Asp-493 together coordinate Mg(2+).

The protein belongs to the RNA polymerase beta' chain family. RpoC1 subfamily. In plastids the minimal PEP RNA polymerase catalytic core is composed of four subunits: alpha, beta, beta', and beta''. When a (nuclear-encoded) sigma factor is associated with the core the holoenzyme is formed, which can initiate transcription. It depends on Mg(2+) as a cofactor. The cofactor is Zn(2+).

The protein resides in the plastid. The protein localises to the chloroplast. It catalyses the reaction RNA(n) + a ribonucleoside 5'-triphosphate = RNA(n+1) + diphosphate. Its function is as follows. DNA-dependent RNA polymerase catalyzes the transcription of DNA into RNA using the four ribonucleoside triphosphates as substrates. This Spinacia oleracea (Spinach) protein is DNA-directed RNA polymerase subunit beta'.